Consider the following 329-residue polypeptide: Nicotianamine synthase 8 (329 aa).

This sequence belongs to the nicotianamine synthase (NAS)-like family. In terms of assembly, homotrimer.

It catalyses the reaction 3 S-adenosyl-L-methionine = nicotianamine + 3 S-methyl-5'-thioadenosine + 3 H(+). Synthesizes nicotianamine, a polyamine that is the first intermediate in the synthesis of the phytosiderophores of the mugineic acid type found in gramineae which serve as a sensor for the physiological iron status within the plant, and/or might be involved in the transport of iron. The chain is Nicotianamine synthase 8 (NAS8) from Hordeum vulgare (Barley).